The chain runs to 375 residues: CMP-N-acetylneuraminate-beta-1,4-galactoside alpha-2,3-sialyltransferase (375 aa).

At methionine 1–arginine 8 the chain is on the cytoplasmic side. The helical; Signal-anchor for type II membrane protein transmembrane segment at asparagine 9–tryptophan 28 threads the bilayer. Residues lysine 29–isoleucine 375 lie on the Lumenal side of the membrane. 2 N-linked (GlcNAc...) asparagine glycosylation sites follow: asparagine 80 and asparagine 171. Cysteines 160 and 314 form a disulfide.

This sequence belongs to the glycosyltransferase 29 family. In terms of processing, the soluble form derives from the membrane form by proteolytic processing. Highly expressed in adult skeletal muscle and in all fetal tissues examined and to a much lesser extent in placenta, lung and liver.

It localises to the golgi apparatus. The protein localises to the golgi stack membrane. Its subcellular location is the secreted. It catalyses the reaction a beta-D-galactosyl-(1-&gt;4)-N-acetyl-beta-D-glucosaminyl derivative + CMP-N-acetyl-beta-neuraminate = an N-acetyl-alpha-neuraminyl-(2-&gt;3)-beta-D-galactosyl-(1-&gt;4)-N-acetyl-beta-D-glucosaminyl derivative + CMP + H(+). It functions in the pathway protein modification; protein glycosylation. Functionally, catalyzes the formation of the NeuAc-alpha-2,3-Gal-beta-1,4-GlcNAc-, NeuAc-alpha-2,3-Gal-beta-1,3-GlcNAc- and NeuAc-alpha-2,3-Gal-beta-1,3-GalNAc- sequences found in terminal carbohydrate groups of glycoproteins and glycolipids. The highest activity is toward Gal-beta-1,3-GlcNAc and the lowest toward Gal-beta-1,3-GalNAc. This is CMP-N-acetylneuraminate-beta-1,4-galactoside alpha-2,3-sialyltransferase (ST3GAL3) from Homo sapiens (Human).